Here is an 83-residue protein sequence, read N- to C-terminus: uncharacterized protein (83 aa).

The interval Glu-58–Gly-83 is disordered.

This is an uncharacterized protein from Mycobacterium tuberculosis (strain CDC 1551 / Oshkosh).